The primary structure comprises 198 residues: Probable GTP-binding protein EngB (198 aa).

The EngB-type G domain occupies 27-198; sequence DLPEVALAGR…ESWDTILSEL (172 aa). GTP is bound by residues 35–42, 62–66, 80–83, 147–150, and 179–181; these read GRSNVGKS, GKTQL, DVPG, TKAD, and FSS. Mg(2+) is bound by residues Ser-42 and Thr-64.

This sequence belongs to the TRAFAC class TrmE-Era-EngA-EngB-Septin-like GTPase superfamily. EngB GTPase family. The cofactor is Mg(2+).

Its function is as follows. Necessary for normal cell division and for the maintenance of normal septation. This is Probable GTP-binding protein EngB from Streptococcus agalactiae serotype III (strain NEM316).